Reading from the N-terminus, the 146-residue chain is Hemoglobin subunit beta-1 (146 aa).

Residues 2–146 form the Globin domain; the sequence is EWTDQERATI…VVSALGKQYH (145 aa). Heme b is bound by residues histidine 63 and histidine 92.

This sequence belongs to the globin family. Hb1 is a heterotetramer of two alpha-1 chains and two beta-1 chains. Hb2 is a heterotetramer of two alpha-2 chains and two beta-1 chains. HbC is a heterotetramer of two alpha-1 chains and two beta-2 chains. In terms of tissue distribution, red blood cells.

Involved in oxygen transport from gills to the various peripheral tissues. In Eleginops maclovinus (Patagonian blennie), this protein is Hemoglobin subunit beta-1.